The following is a 366-amino-acid chain: Chorismate synthase (366 aa).

2 residues coordinate NADP(+): R48 and R54. FMN-binding positions include 125-127 (RSS), 238-239 (NA), G278, 293-297 (KPTSS), and R319.

Belongs to the chorismate synthase family. As to quaternary structure, homotetramer. The cofactor is FMNH2.

It catalyses the reaction 5-O-(1-carboxyvinyl)-3-phosphoshikimate = chorismate + phosphate. The protein operates within metabolic intermediate biosynthesis; chorismate biosynthesis; chorismate from D-erythrose 4-phosphate and phosphoenolpyruvate: step 7/7. Catalyzes the anti-1,4-elimination of the C-3 phosphate and the C-6 proR hydrogen from 5-enolpyruvylshikimate-3-phosphate (EPSP) to yield chorismate, which is the branch point compound that serves as the starting substrate for the three terminal pathways of aromatic amino acid biosynthesis. This reaction introduces a second double bond into the aromatic ring system. The protein is Chorismate synthase of Chromobacterium violaceum (strain ATCC 12472 / DSM 30191 / JCM 1249 / CCUG 213 / NBRC 12614 / NCIMB 9131 / NCTC 9757 / MK).